The following is a 433-amino-acid chain: Gamma-glutamyl phosphate reductase (433 aa).

It belongs to the gamma-glutamyl phosphate reductase family.

The protein localises to the cytoplasm. It catalyses the reaction L-glutamate 5-semialdehyde + phosphate + NADP(+) = L-glutamyl 5-phosphate + NADPH + H(+). It participates in amino-acid biosynthesis; L-proline biosynthesis; L-glutamate 5-semialdehyde from L-glutamate: step 2/2. Its function is as follows. Catalyzes the NADPH-dependent reduction of L-glutamate 5-phosphate into L-glutamate 5-semialdehyde and phosphate. The product spontaneously undergoes cyclization to form 1-pyrroline-5-carboxylate. This is Gamma-glutamyl phosphate reductase from Rhodopseudomonas palustris (strain BisB18).